We begin with the raw amino-acid sequence, 555 residues long: Capsid vertex component 2 (555 aa).

The interaction with major capsid protein/MCP stretch occupies residues 1–47; the sequence is MAQCNLFYQYPITPILEGHVRNILICTEKDVEKLQSQSSLRLREKID.

Belongs to the herpesviridae CVC2 protein family. Heterodimerizes with CVC1. Interacts with major capsid protein/MCP and triplex capsid protein 1/TRX1 at the pentamer vertices. Interacts with the large tegument protein/LTP.

The protein resides in the virion. It is found in the host nucleus. In terms of biological role, capsid vertex-specific component that plays a role during viral DNA encapsidation, assuring correct genome cleavage and presumably stabilizing capsids that contain full-length viral genomes. Participates in the interaction between the capsid and the tegument through interaction with the large tegument protein/LTP. The protein is Capsid vertex component 2 of Homo sapiens (Human).